The sequence spans 716 residues: 1,4-alpha-glucan branching enzyme GlgB (716 aa).

Aspartate 399 acts as the Nucleophile in catalysis. The Proton donor role is filled by glutamate 452.

Belongs to the glycosyl hydrolase 13 family. GlgB subfamily. Monomer.

It catalyses the reaction Transfers a segment of a (1-&gt;4)-alpha-D-glucan chain to a primary hydroxy group in a similar glucan chain.. It functions in the pathway glycan biosynthesis; glycogen biosynthesis. Functionally, catalyzes the formation of the alpha-1,6-glucosidic linkages in glycogen by scission of a 1,4-alpha-linked oligosaccharide from growing alpha-1,4-glucan chains and the subsequent attachment of the oligosaccharide to the alpha-1,6 position. The polypeptide is 1,4-alpha-glucan branching enzyme GlgB (Rhodopseudomonas palustris (strain ATCC BAA-98 / CGA009)).